Consider the following 223-residue polypeptide: Phosphoribosylformylglycinamidine synthase subunit PurQ (223 aa).

The region spanning 3 to 223 (SAVILLPGLN…LFAGALGITA (221 aa)) is the Glutamine amidotransferase type-1 domain. The Nucleophile role is filled by C87. Active-site residues include H197 and E199.

In terms of assembly, part of the FGAM synthase complex composed of 1 PurL, 1 PurQ and 2 PurS subunits.

It is found in the cytoplasm. The catalysed reaction is N(2)-formyl-N(1)-(5-phospho-beta-D-ribosyl)glycinamide + L-glutamine + ATP + H2O = 2-formamido-N(1)-(5-O-phospho-beta-D-ribosyl)acetamidine + L-glutamate + ADP + phosphate + H(+). The enzyme catalyses L-glutamine + H2O = L-glutamate + NH4(+). It functions in the pathway purine metabolism; IMP biosynthesis via de novo pathway; 5-amino-1-(5-phospho-D-ribosyl)imidazole from N(2)-formyl-N(1)-(5-phospho-D-ribosyl)glycinamide: step 1/2. Functionally, part of the phosphoribosylformylglycinamidine synthase complex involved in the purines biosynthetic pathway. Catalyzes the ATP-dependent conversion of formylglycinamide ribonucleotide (FGAR) and glutamine to yield formylglycinamidine ribonucleotide (FGAM) and glutamate. The FGAM synthase complex is composed of three subunits. PurQ produces an ammonia molecule by converting glutamine to glutamate. PurL transfers the ammonia molecule to FGAR to form FGAM in an ATP-dependent manner. PurS interacts with PurQ and PurL and is thought to assist in the transfer of the ammonia molecule from PurQ to PurL. This is Phosphoribosylformylglycinamidine synthase subunit PurQ from Brucella suis biovar 1 (strain 1330).